The primary structure comprises 355 residues: uncharacterized protein (355 aa).

A chloroplast-targeting transit peptide spans 1–49 (MPMTVVSGRFSTALLPTCFSLSRLHSVKYAAQRRVVFVSRSAHASSASV).

The protein belongs to the methyltransferase superfamily.

It localises to the plastid. It is found in the chloroplast. Its subcellular location is the plastoglobule. This is an uncharacterized protein from Arabidopsis thaliana (Mouse-ear cress).